The chain runs to 169 residues: Putative pre-16S rRNA nuclease (169 aa).

Residues 1–19 are compositionally biased toward basic and acidic residues; that stretch reads MTDSDHRLPDRPGEGDPGR. Positions 1-24 are disordered; it reads MTDSDHRLPDRPGEGDPGRGRRIG.

It belongs to the YqgF nuclease family.

Its subcellular location is the cytoplasm. Could be a nuclease involved in processing of the 5'-end of pre-16S rRNA. This chain is Putative pre-16S rRNA nuclease, found in Mycobacterium sp. (strain KMS).